A 62-amino-acid polypeptide reads, in one-letter code: Large ribosomal subunit protein bL32 (62 aa).

The segment at 28-62 (SIEPTTGEVHRRHHISPDGFYRGRQVIKAKEQDEE) is disordered.

The protein belongs to the bacterial ribosomal protein bL32 family.

In Thioalkalivibrio sulfidiphilus (strain HL-EbGR7), this protein is Large ribosomal subunit protein bL32.